A 1063-amino-acid polypeptide reads, in one-letter code: MPHLPLASFRPPFWGLRHSRGLPRFHSVSTQSEPHGSPISRRNREAKQKRLREKQATLEAEIAGESKSPAESIKAWRPKELVLYEIPTKPGEKKDVSGPLPPAYSPRYVEAAWYPWWVREGFFKPEYQARLPQATGETFSMCIPPPNVTGSLHIGHALTVAIQDALVRWHRMRGDQVLWVPGSDHAGIATQAVVEKQLWKERGVRRHELSREAFLREVWQWKEAKGGEICEQLRALGASLDWDRECFTMDVGSSVAVTEAFVRLYKAGLLYRNHQLVNWSCALRSAISDIEVENRPLPGHTQLRLPGCPTPVSFGLLFSVAFPVDGEPDAEVVVGTTRPETLPGDVAVAVHPDDSRYTHLHGRQLRHPLMGQPLPLITDYAVQPHVGTGAVKVTPAHSPADAEMGARHGLSPLNVIAEDGTMTSLCGDWLQGLHRFVAREKIMSVLSEWGLFRGLQNHPMVLPICSRSGDVIEYLLKNQWFVRCQEMGARAAKAVESGALELSPSFHQKNWQHWFSHIGDWCVSRQLWWGHQIPAYLVVEDHAQGEEDCWVVGRSEAEAREVAAELTGRPGAELTLERDPDVLDTWFSSALFPFSALGWPQETPDLARFYPLSLLETGSDLLLFWVGRMVMLGTQLTGQLPFSKVLLHPMVRDRQGRKMSKSLGNVLDPRDIISGVEMQVLQEKLRSGNLDPAELAIVAAAQKKDFPHGIPECGTDALRFTLCSHGVQAGDLHLSVSEVQSCRHFCNKIWNALRFILNALGEKFVPQPAEELSPSSPMDAWILSRLALAAQECERGFLTRELSLVTHALHHFWLHNLCDVYLEAVKPVLWHSPRPLGPPQVLFSCADLGLRLLAPLMPFLAEELWQRLPPRPGCPPAPSISVAPYPSACSLEHWRQPELERRFSRVQEVVQVLRALRATYQLTKARPRVLLQSSEPGDQGLFEAFLEPLGTLGYCGAVGLLPPGAAAPSGWAQAPLSDTAQVYMELQGLVDPQIQLPLLAARRYKLQKQLDSLTARTPSEGEAGTQRQQKLSSLQLELSKLDKAASHLRQLMDEPPAPGSPEL.

The transit peptide at 1–26 (MPHLPLASFRPPFWGLRHSRGLPRFH) directs the protein to the mitochondrion. The interval 25-53 (FHSVSTQSEPHGSPISRRNREAKQKRLRE) is disordered. The segment covering 42-53 (RNREAKQKRLRE) has biased composition (basic and acidic residues). The 'HIGH' region motif lies at 146–156 (PNVTGSLHIGH). Positions 658-662 (KMSKS) match the 'KMSKS' region motif. K661 contacts ATP.

Belongs to the class-I aminoacyl-tRNA synthetase family.

Its subcellular location is the mitochondrion. It carries out the reaction tRNA(Val) + L-valine + ATP = L-valyl-tRNA(Val) + AMP + diphosphate. Its function is as follows. Catalyzes the attachment of valine to tRNA(Val) in a two-step reaction: valine is first activated by ATP to form Val-AMP and then transferred to the acceptor end of tRNA(Val). This is Valine--tRNA ligase, mitochondrial (VARS2) from Homo sapiens (Human).